The primary structure comprises 388 residues: Translation initiation factor eIF2B subunit beta (388 aa).

Residues 109 to 133 (DDFETTTSNNNNNNNNNNINSSSNI) form a disordered region. The segment covering 116 to 133 (SNNNNNNNNNNINSSSNI) has biased composition (low complexity).

This sequence belongs to the eIF-2B alpha/beta/delta subunits family. Component of the translation initiation factor 2B (eIF2B) complex which is a heterodecamer of two sets of five different subunits: alpha, beta, gamma, delta and epsilon. Subunits alpha, beta and delta comprise a regulatory subcomplex and subunits epsilon and gamma comprise a catalytic subcomplex. Within the complex, the hexameric regulatory complex resides at the center, with the two heterodimeric catalytic subcomplexes bound on opposite sides.

It is found in the cytoplasm. The protein resides in the cytosol. In terms of biological role, acts as a component of the translation initiation factor 2B (eIF2B) complex, which catalyzes the exchange of GDP for GTP on eukaryotic initiation factor 2 (eIF2) gamma subunit. Its guanine nucleotide exchange factor activity is repressed when bound to eIF2 complex phosphorylated on the alpha subunit, thereby limiting the amount of methionyl-initiator methionine tRNA available to the ribosome and consequently global translation is repressed. The chain is Translation initiation factor eIF2B subunit beta (eif2b2) from Dictyostelium discoideum (Social amoeba).